A 250-amino-acid polypeptide reads, in one-letter code: Ferritin-2, chloroplastic (250 aa).

Residues 1-43 (MLLRTAAASSLSLFNPNAEPSRSVPVLANNASRLVVRAAKGST) constitute a chloroplast transit peptide. The tract at residues 44-76 (NHRALTGVIFEPFEEVKKELDLVPTVPQASLAR) is extension peptide (EP). Positions 77–230 (QKYVDESEAA…EYVAQLRRVG (154 aa)) constitute a Ferritin-like diiron domain. 5 residues coordinate Fe cation: Glu-94, Glu-129, His-132, Glu-178, and Gln-212.

The protein belongs to the ferritin family. In terms of assembly, oligomer of 24 subunits. There are two types of subunits: L (light) chain and H (heavy) chain. The major chain can be light or heavy, depending on the species and tissue type. The functional molecule forms a roughly spherical shell with a diameter of 12 nm and contains a central cavity into which the insoluble mineral iron core is deposited.

It is found in the plastid. The protein resides in the chloroplast. It carries out the reaction 4 Fe(2+) + O2 + 4 H(+) = 4 Fe(3+) + 2 H2O. Functionally, stores iron in a soluble, non-toxic, readily available form. Important for iron homeostasis. Has ferroxidase activity. Iron is taken up in the ferrous form and deposited as ferric hydroxides after oxidation. This Vigna unguiculata (Cowpea) protein is Ferritin-2, chloroplastic (PFE2).